The primary structure comprises 421 residues: Zinc metalloproteinase-disintegrin-like lachestatin-2 (421 aa).

Residues 10–206 (KYVKLVLVAD…DMPQCILEKP (197 aa)) enclose the Peptidase M12B domain. Intrachain disulfides connect cysteine 121/cysteine 201, cysteine 161/cysteine 185, and cysteine 163/cysteine 168. Zn(2+) is bound at residue histidine 146. Glutamate 147 is an active-site residue. Zn(2+)-binding residues include histidine 150 and histidine 156. The Disintegrin domain occupies 214-299 (PPVCGNYFVE…AECTDRFQRN (86 aa)). Ca(2+) contacts are provided by valine 216, asparagine 219, phenylalanine 221, glutamate 223, glutamate 226, and aspartate 229. Intrachain disulfides connect cysteine 217–cysteine 246, cysteine 228–cysteine 241, cysteine 230–cysteine 236, cysteine 240–cysteine 263, cysteine 254–cysteine 260, cysteine 259–cysteine 285, cysteine 272–cysteine 292, cysteine 279–cysteine 310, cysteine 303–cysteine 315, cysteine 322–cysteine 372, cysteine 337–cysteine 383, cysteine 350–cysteine 360, cysteine 367–cysteine 409, and cysteine 403–cysteine 414. The short motif at 278-280 (ECD) is the D/ECD-tripeptide element. The Ca(2+) site is built by aspartate 280, methionine 281, aspartate 283, aspartate 294, and arginine 295. An N-linked (GlcNAc...) asparagine glycan is attached at asparagine 312.

It belongs to the venom metalloproteinase (M12B) family. P-III subfamily. P-IIIc sub-subfamily. As to quaternary structure, homodimer; disulfide-linked. Zn(2+) is required as a cofactor. In terms of tissue distribution, expressed by the venom gland.

It is found in the secreted. In terms of biological role, snake venom zinc metalloprotease that induces apoptosis in vascular endothelial cells (VEC), without degrading the extracellular matrix (it cannot cleave collagen) or inhibiting adhesion of VEC. Has also fibrinogenolytic and hemorrhagic activities. The protein is Zinc metalloproteinase-disintegrin-like lachestatin-2 of Lachesis muta rhombeata (Bushmaster).